Consider the following 608-residue polypeptide: Nuclear receptor subfamily 2 group C member 1 (608 aa).

The segment at 1 to 179 (MASIEEIAHQ…RLQRCIAFGM (179 aa)) is required for interaction with KAT2B. Positions 111–186 (FDLCVVCGDK…FGMKQDSVQC (76 aa)) form a DNA-binding region, nuclear receptor. 2 NR C4-type zinc fingers span residues 114 to 134 (CVVC…CEGC) and 150 to 169 (CRGS…CQYC). Phosphoserine occurs at positions 198 and 216. Threonine 221 is modified (phosphothreonine). A Phosphothreonine; by MAPK1 modification is found at threonine 223. A Glycyl lysine isopeptide (Lys-Gly) (interchain with G-Cter in SUMO); alternate cross-link involves residue lysine 251. A Glycyl lysine isopeptide (Lys-Gly) (interchain with G-Cter in SUMO2); alternate cross-link involves residue lysine 251. The NR LBD domain occupies 353–595 (GNVHLIAGDS…SVIPHILKME (243 aa)). A Phosphoserine; by PKC modification is found at serine 586. Residues 589–608 (PHILKMEPADYNSQIIGHSI) are required for interaction with NRIP1. Residue lysine 593 forms a Glycyl lysine isopeptide (Lys-Gly) (interchain with G-Cter in SUMO2) linkage.

Belongs to the nuclear hormone receptor family. NR2 subfamily. As to quaternary structure, homodimer. Heterodimer; with NR2C2 which is required for chromatin remodeling and for binding to promoter regions such as globin DR1 repeats. Interacts with ESR1; the interaction prevents homodimerization of ESR1 and suppresses its transcriptional activity and cell growth. Interacts with NRIP1 (via its LXXLL motifs); the interaction provides corepressor activity. Interacts with HDAC3 (via the DNA-binding domain); the interaction recruits phosphorylated NR2C1 to PML bodies for sumoylation. Interacts with HDAC4 (via the DNA-binding domain). Interacts with PIAS1; the interaction is required for sumoylation of NR2C1. Interacts with UBE2I; the interaction is required for sumoylation of NR2C1. Interacts with KAT2B; the interaction acts as a corepressor of gene expression. Post-translationally, sumoylation requires both PIAS1 and UBE2I. Sumoylation appears to dissociate NR2C1 from the PML nuclear bodies. Enhances the interaction with NRIP1 but inhibits interaction with KAT2B. In proliferating cells, stimulation by all-trans retinoic acid, activation of MAPK1-mediated phosphorylation and recruitment to PML bodies with subsequent sumoylation, suppresses OCT4 expression. Phosphorylated on several serine and threonine residues. Phosphorylation on Thr-223, stimulated by all-trans retinoic acid (atRA) mediates PML location and sumoylation in proliferating cells which then modulates its association with effector molecules, KAT2B and NRIP1. Phosphorylation on Ser-586 by PKC is important for protein stability and function as activator of RARB.

It is found in the nucleus. It localises to the PML body. Functionally, orphan nuclear receptor. Binds the IR7 element in the promoter of its own gene in an autoregulatory negative feedback mechanism. Primarily repressor of a broad range of genes including ESR1 and RARB. Together with NR2C2, forms the core of the DRED (direct repeat erythroid-definitive) complex that represses embryonic and fetal globin transcription. Binds to hormone response elements (HREs) consisting of two 5'-AGGTCA-3' half site direct repeat consensus sequences. Also activator of OCT4 gene expression. Plays a fundamental role in early embryogenesis and regulates embryonic stem cell proliferation and differentiation. Mediator of retinoic acid-regulated preadipocyte proliferation. The sequence is that of Nuclear receptor subfamily 2 group C member 1 (NR2C1) from Bos taurus (Bovine).